Consider the following 346-residue polypeptide: Haptoglobin-related protein (346 aa).

The not cleaved signal peptide spans 1-16 (DLGAVIYLLLWGRQLF). A Sushi domain is found at 32-85 (FPKPPEIANGYVEHLFRYQRKNYYRLRTEGDGVYTLNDKKQWINKAVGDKLPEC). The region spanning 102 to 344 (ILGGHLDAKG…IHVWVQKTIA (243 aa)) is the Peptidase S1 domain. Disulfide bonds link cysteine 249–cysteine 280 and cysteine 291–cysteine 321.

The protein belongs to the peptidase S1 family.

Its subcellular location is the secreted. In terms of biological role, primate-specific plasma protein associated with apolipoprotein L-I (apoL-I)-containing high-density lipoprotein (HDL). Binds hemoglobin with high affinity and may contribute to the clearance of cell-free hemoglobin to allow hepatic recycling of heme iron. The polypeptide is Haptoglobin-related protein (HPR) (Pan troglodytes (Chimpanzee)).